The sequence spans 224 residues: Large ribosomal subunit protein uL1 (224 aa).

This sequence belongs to the universal ribosomal protein uL1 family. As to quaternary structure, part of the 50S ribosomal subunit.

Its function is as follows. Binds directly to 23S rRNA. The L1 stalk is quite mobile in the ribosome, and is involved in E site tRNA release. Protein L1 is also a translational repressor protein, it controls the translation of the L11 operon by binding to its mRNA. This chain is Large ribosomal subunit protein uL1, found in Borrelia recurrentis (strain A1).